The chain runs to 77 residues: Conotoxin Cl6.15 (77 aa).

The first 19 residues, 1–19 (MKLSVKFLLFLMILPLIAG), serve as a signal peptide directing secretion. A propeptide spanning residues 20 to 37 (EDMSDNDAPKSVDVQRNV) is cleaved from the precursor. 3 cysteine pairs are disulfide-bonded: Cys-49–Cys-61, Cys-55–Cys-66, and Cys-60–Cys-75.

This sequence belongs to the conotoxin I1 superfamily. Expressed by the venom duct.

It localises to the secreted. In Californiconus californicus (California cone), this protein is Conotoxin Cl6.15.